Reading from the N-terminus, the 491-residue chain is Glutamyl-tRNA(Gln) amidotransferase subunit A (491 aa).

Active-site charge relay system residues include K78 and S158. S182 functions as the Acyl-ester intermediate in the catalytic mechanism.

The protein belongs to the amidase family. GatA subfamily. As to quaternary structure, heterotrimer of A, B and C subunits.

It catalyses the reaction L-glutamyl-tRNA(Gln) + L-glutamine + ATP + H2O = L-glutaminyl-tRNA(Gln) + L-glutamate + ADP + phosphate + H(+). Its function is as follows. Allows the formation of correctly charged Gln-tRNA(Gln) through the transamidation of misacylated Glu-tRNA(Gln) in organisms which lack glutaminyl-tRNA synthetase. The reaction takes place in the presence of glutamine and ATP through an activated gamma-phospho-Glu-tRNA(Gln). This is Glutamyl-tRNA(Gln) amidotransferase subunit A from Afipia carboxidovorans (strain ATCC 49405 / DSM 1227 / KCTC 32145 / OM5) (Oligotropha carboxidovorans).